We begin with the raw amino-acid sequence, 360 residues long: Probable cinnamyl alcohol dehydrogenase 9 (360 aa).

Cys-50 contributes to the Zn(2+) binding site. Thr-52 serves as a coordination point for NADP(+). Residues His-72, Glu-73, Cys-103, Cys-106, Cys-109, Cys-117, and Cys-166 each contribute to the Zn(2+) site. Residues Thr-170, 191–196, 214–219, Thr-254, Gly-278, and 301–303 each bind NADP(+); these read GLGGLG, SSSSTK, and SDV.

Belongs to the zinc-containing alcohol dehydrogenase family. As to quaternary structure, homodimer. Zn(2+) is required as a cofactor. As to expression, expressed in the vasculature of the primary root and elongation regions. Expressed in the hypocotyl, cotyledon veins, vasculature of the first rosette leaves, and hydathodes. In stems, expressed in the vascular cambium, interfascicular cambium, developing xylem, and phloem. Expressed in the entire floral organs at late developing stage, and in the abscission, style and stigmatic regions of siliques and seed funicules.

The catalysed reaction is (E)-cinnamyl alcohol + NADP(+) = (E)-cinnamaldehyde + NADPH + H(+). It participates in aromatic compound metabolism; phenylpropanoid biosynthesis. Functionally, involved in lignin biosynthesis. May catalyze the final step specific for the production of lignin monomers, like coniferyl alcohol, sinapyl alcohol and 4-coumaryl alcohol. This chain is Probable cinnamyl alcohol dehydrogenase 9 (CAD9), found in Arabidopsis thaliana (Mouse-ear cress).